The sequence spans 490 residues: Protein lag-3 (490 aa).

Disordered stretches follow at residues 18–55, 105–155, 213–235, 307–362, and 391–490; these read PSVA…EDEP, EDEE…PTSE, SSAD…SPAE, SSSE…MQRI, and QQQQ…ANIN. Positions 105–119 are enriched in basic and acidic residues; sequence EDEERKRVEQQKNKE. Positions 122–138 are enriched in polar residues; the sequence is NASTSAPTSSRNGGQSV. Residues 307 to 318 show a composition bias toward polar residues; the sequence is SSSESPTKQSPM. 3 stretches are compositionally biased toward low complexity: residues 341-359, 391-404, and 413-456; these read QLQQ…QQEM, QQQQ…HHQM, and QAHQ…HHQM.

Component of a complex consisting of at least a lin-12/Notch intracellular domain (NICD), lag-1, and lag-3. Interacts with a NICD of lin-12/Notch or glp-1/Notch; the interactions are direct. Expressed in the progenitor zone and the early pachytene region of the hermaphrodite gonad.

It localises to the nucleus. In terms of biological role, glp-1/Notch and lin-12/Notch proteins promote signaling by recruiting lag-3 to target promoters, where it functions as a transcriptional activator, probably as part of a complex with a Notch intracellular domain (NICD) and the transcription regulator lag-1. Involved in the p53-mediated germ-cell apoptotic response to DNA damage, perhaps acting as a transcriptional activator. May regulate phosphatase lip-1 mRNA transcription downstream of glp-1. This chain is Protein lag-3 (sel-8), found in Caenorhabditis elegans.